The primary structure comprises 190 residues: Ribosome hibernation promotion factor (190 aa).

The protein belongs to the HPF/YfiA ribosome-associated protein family. Long HPF subfamily. Interacts with 100S ribosomes.

It localises to the cytoplasm. Required for dimerization of active 70S ribosomes into 100S ribosomes in stationary phase; 100S ribosomes are translationally inactive and sometimes present during exponential growth. The protein is Ribosome hibernation promotion factor of Rhizobium meliloti (strain 1021) (Ensifer meliloti).